We begin with the raw amino-acid sequence, 140 residues long: Large ribosomal subunit protein uL16 (140 aa).

A compositionally biased stretch (basic residues) spans 1–14 (MLSPRRTKFRKQQR). Positions 1–22 (MLSPRRTKFRKQQRGRMEGAAT) are disordered.

The protein belongs to the universal ribosomal protein uL16 family. In terms of assembly, part of the 50S ribosomal subunit.

Its function is as follows. Binds 23S rRNA and is also seen to make contacts with the A and possibly P site tRNAs. This Cyanothece sp. (strain PCC 7425 / ATCC 29141) protein is Large ribosomal subunit protein uL16.